Here is a 303-residue protein sequence, read N- to C-terminus: Uricase (303 aa).

Ala2 carries the N-acetylalanine modification. N6-acetyllysine; alternate is present on residues Lys10 and Lys23. N6-succinyllysine; alternate occurs at positions 10 and 23. The active-site Charge relay system is the Lys23. Lys27 and Lys36 each carry N6-acetyllysine. Ser39 and Ser63 each carry phosphoserine. Residue Thr68 is the Charge relay system of the active site. 2 residues coordinate urate: Thr68 and Asp69. An N6-acetyllysine mark is found at Lys118, Lys122, and Lys164. Urate is bound at residue Phe170. 2 positions are modified to N6-acetyllysine: Lys175 and Lys185. Arg187 contacts urate. Lys220 is modified (N6-acetyllysine; alternate). Lys220 carries the post-translational modification N6-succinyllysine; alternate. A Phosphoserine modification is found at Ser231. Urate-binding residues include Val234, Gln235, and Asn261. The Charge relay system role is filled by His263. Lys277 carries the post-translational modification N6-acetyllysine. Tyr288 carries the post-translational modification Phosphotyrosine. Positions 301–303 match the Microbody targeting signal motif; it reads SRL.

The protein belongs to the uricase family. In terms of tissue distribution, expressed in liver. Not detected in other tissues tested.

The protein localises to the peroxisome. It catalyses the reaction urate + O2 + H2O = 5-hydroxyisourate + H2O2. It participates in purine metabolism; urate degradation; (S)-allantoin from urate: step 1/3. Competitively inhibited by xanthine. Functionally, catalyzes the oxidation of uric acid to 5-hydroxyisourate, which is further processed to form (S)-allantoin. The sequence is that of Uricase (Uox) from Rattus norvegicus (Rat).